Consider the following 414-residue polypeptide: Phosphoglycerate kinase (414 aa).

Substrate contacts are provided by residues 20–22, Arg-37, 60–63, Arg-117, and Arg-164; these read DIN and HQSR. Residues Glu-338 and 364–367 each bind ATP; that span reads GGHL.

The protein belongs to the phosphoglycerate kinase family. Monomer.

It localises to the cytoplasm. The enzyme catalyses (2R)-3-phosphoglycerate + ATP = (2R)-3-phospho-glyceroyl phosphate + ADP. Its pathway is carbohydrate degradation; glycolysis; pyruvate from D-glyceraldehyde 3-phosphate: step 2/5. The protein is Phosphoglycerate kinase of Methanococcus maripaludis (strain DSM 14266 / JCM 13030 / NBRC 101832 / S2 / LL).